Here is a 191-residue protein sequence, read N- to C-terminus: Thymidylate kinase (191 aa).

ATP is bound at residue 7 to 14 (GIDGVGKS).

This sequence belongs to the thymidylate kinase family.

The catalysed reaction is dTMP + ATP = dTDP + ADP. Its function is as follows. Phosphorylation of dTMP to form dTDP in both de novo and salvage pathways of dTTP synthesis. This chain is Thymidylate kinase, found in Helicobacter acinonychis (strain Sheeba).